Consider the following 541-residue polypeptide: CRISPR-associated exonuclease Cas4/endonuclease Cas1 fusion (541 aa).

Residues 1-179 (MGIHSLLYCE…NCSLAPVCLP (179 aa)) are CRISPR-associated exonuclease Cas4. Cys9 provides a ligand contact to [4Fe-4S] cluster. 2 residues coordinate Mn(2+): Asp65 and Glu78. [4Fe-4S] cluster contacts are provided by Cys168, Cys171, and Cys177. A CRISPR-associated endonuclease Cas1 region spans residues 204-541 (TLHVFGHDSR…ANIFAQARLR (338 aa)). Residues Glu365, His433, and Glu448 each coordinate Mn(2+).

It in the N-terminal section; belongs to the CRISPR-associated exonuclease Cas4 family. In the C-terminal section; belongs to the CRISPR-associated endonuclease Cas1 family. In terms of assembly, homodimer, forms a heterotetramer with a Cas2 homodimer. [4Fe-4S] cluster is required as a cofactor. The cofactor is Mg(2+). It depends on Mn(2+) as a cofactor.

It carries out the reaction exonucleolytic cleavage in the 5'- to 3'-direction to yield nucleoside 3'-phosphates.. CRISPR (clustered regularly interspaced short palindromic repeat), is an adaptive immune system that provides protection against mobile genetic elements (viruses, transposable elements and conjugative plasmids). CRISPR clusters contain spacers, sequences complementary to antecedent mobile elements, and target invading nucleic acids. CRISPR clusters are transcribed and processed into CRISPR RNA (crRNA). The Cas4 region acts as a ssDNA exonuclease, while the Cas1 region acts as a dsDNA endonuclease. Involved in the integration of spacer DNA into the CRISPR cassette. The polypeptide is CRISPR-associated exonuclease Cas4/endonuclease Cas1 fusion (cas4-cas1) (Leptospira interrogans serogroup Icterohaemorrhagiae serovar Lai (strain 56601)).